The chain runs to 118 residues: Large ribosomal subunit protein uL24 (118 aa).

It belongs to the universal ribosomal protein uL24 family. In terms of assembly, part of the 50S ribosomal subunit.

Its function is as follows. One of two assembly initiator proteins, it binds directly to the 5'-end of the 23S rRNA, where it nucleates assembly of the 50S subunit. In terms of biological role, one of the proteins that surrounds the polypeptide exit tunnel on the outside of the subunit. The polypeptide is Large ribosomal subunit protein uL24 (Prochlorococcus marinus subsp. pastoris (strain CCMP1986 / NIES-2087 / MED4)).